Here is a 302-residue protein sequence, read N- to C-terminus: Methionyl-tRNA formyltransferase (302 aa).

A (6S)-5,6,7,8-tetrahydrofolate-binding site is contributed by 106-109 (SVLP).

Belongs to the Fmt family.

The enzyme catalyses L-methionyl-tRNA(fMet) + (6R)-10-formyltetrahydrofolate = N-formyl-L-methionyl-tRNA(fMet) + (6S)-5,6,7,8-tetrahydrofolate + H(+). Attaches a formyl group to the free amino group of methionyl-tRNA(fMet). The formyl group appears to play a dual role in the initiator identity of N-formylmethionyl-tRNA by promoting its recognition by IF2 and preventing the misappropriation of this tRNA by the elongation apparatus. The polypeptide is Methionyl-tRNA formyltransferase (Hydrogenobaculum sp. (strain Y04AAS1)).